A 1441-amino-acid polypeptide reads, in one-letter code: Histone-lysine N-methyltransferase SETD5 (1441 aa).

The disordered stretch occupies residues 1–28 (MSIAIPLGVTTPDTSYSDMAAGSDPESV). Leu-70 is subject to Phosphothreonine. Ser-72 and Val-74 each carry phosphoserine. The tract at residues 156–202 (TPTSITLTVRRTKPKKRKKSPEKGRAAPKTKKIKNSPSEAQNLDENT) is disordered. The span at 165–189 (RRTKPKKRKKSPEKGRAAPKTKKIK) shows a compositional bias: basic residues. Residues 190 to 202 (NSPSEAQNLDENT) are compositionally biased toward polar residues. Positions 269 to 390 (MQLQLGRVTR…KDAEVTIAFD (122 aa)) constitute an SET domain. 2 disordered regions span residues 417–683 (NPNA…TVIS) and 793–816 (MTQT…ETSN). Acidic residues-rich tracts occupy residues 450 to 461 (LEQQNEVPEENP) and 479 to 501 (EEVD…DDQE). Composition is skewed to low complexity over residues 539-552 (SSSD…SSEI) and 561-572 (AAPESEVSSPVS). A compositionally biased stretch (polar residues) spans 575-588 (AIPSTPQSTGVNTR). Residues 611 to 621 (SRPRPKSRISR) are compositionally biased toward basic residues. Residues 635–650 (QAIAQQAELSQAALEE) show a composition bias toward low complexity. Residues 652-683 (GSNNSVTPPEAGNTDSSGENRQLTGSDPTVIS) are compositionally biased toward polar residues. Ser-829 and Ser-852 each carry phosphoserine. Disordered stretches follow at residues 849 to 883 (QPLS…ECRN), 1036 to 1228 (DLSR…SKGA), and 1243 to 1441 (CDSP…TGLS). Phosphothreonine is present on Thr-855. Positions 1062 to 1076 (QRKKVSLLEYRKRKQ) are enriched in basic residues. Residues 1087–1107 (DSSQSKSKSSGAGQGSSNSVS) are compositionally biased toward low complexity. Residues 1144–1163 (PSDSRGTSSSHCRPQENISS) are compositionally biased toward polar residues. Ser-1197 is subject to Phosphoserine. A compositionally biased stretch (low complexity) spans 1250–1259 (SQSLLQQSSS). The segment covering 1265–1275 (PTQSPGYSYRT) has biased composition (polar residues). A compositionally biased stretch (low complexity) spans 1284–1300 (PSHGSSESSLSSTSYPS). A compositionally biased stretch (polar residues) spans 1319–1333 (YYSSQPHSGNSTGSN). Residues 1335–1372 (PRRSCSSSAASPTPQGPSDSPTSDSVSQSSTGTLSSTS) show a composition bias toward low complexity. Polar residues-rich tracts occupy residues 1373 to 1382 (FPQNSRSSLP), 1389 to 1412 (SLPN…NSQH), and 1429 to 1441 (LQGS…TGLS).

As to quaternary structure, interacts with components of the PAF1 complex (PAF1C) such as LEO1, CTR9 and CDC73. Interacts with NCOR1. Interacts with HDAC3. Ubiquitously expressed.

It is found in the nucleus. The protein localises to the chromosome. The catalysed reaction is L-lysyl(9)-[histone H3] + S-adenosyl-L-methionine = N(6)-methyl-L-lysyl(9)-[histone H3] + S-adenosyl-L-homocysteine + H(+). It carries out the reaction L-lysyl(36)-[histone H3] + 3 S-adenosyl-L-methionine = N(6),N(6),N(6)-trimethyl-L-lysyl(36)-[histone H3] + 3 S-adenosyl-L-homocysteine + 3 H(+). In terms of biological role, chromatin regulator required for brain development: acts as a regulator of RNA elongation rate, thereby regulating neural stem cell (NSC) proliferation and synaptic transmission. May act by mediating trimethylation of 'Lys-36' of histone H3 (H3K36me3), which is essential to allow on-time RNA elongation dynamics. Also monomethylates 'Lys-9' of histone H3 (H3K9me1) in vitro. The relevance of histone methyltransferase activity is however subject to discussion. The polypeptide is Histone-lysine N-methyltransferase SETD5 (Mus musculus (Mouse)).